A 632-amino-acid polypeptide reads, in one-letter code: Polygalacturonase non-catalytic subunit AroGP3 (632 aa).

A signal peptide spans 1–27 (MHTKILLPSCILLLLLFTLSSLDVVVA). Positions 28–109 (KDGDESGNPF…MCALDLLPSL (82 aa)) are excised as a propeptide. 7 N-linked (GlcNAc...) asparagine glycosylation sites follow: asparagine 125, asparagine 143, asparagine 258, asparagine 280, asparagine 336, asparagine 371, and asparagine 389. One can recognise a BURP domain in the interval 417-631 (FFREKMLKSG…FENDMTWATA (215 aa)).

As to quaternary structure, interacts with polygalacturonase to form heterodimers.

The protein localises to the secreted. Its subcellular location is the extracellular space. The protein resides in the apoplast. It is found in the cell wall. Functionally, non-catalytic subunit of polygalacturonase. The chain is Polygalacturonase non-catalytic subunit AroGP3 (GP3) from Solanum lycopersicum (Tomato).